Consider the following 27-residue polypeptide: Secretin (27 aa).

Val-27 carries the post-translational modification Valine amide.

This sequence belongs to the glucagon family.

The protein resides in the secreted. Its function is as follows. Hormone involved in different processes, such as regulation of the pH of the duodenal content, food intake and water homeostasis. Exerts its biological effects by binding to secretin receptor (SCTR), a G-protein coupled receptor expressed in the basolateral domain of several cells. Acts as a key gastrointestinal hormone by regulating the pH of the duodenal content. Secreted by S cells of the duodenum in the crypts of Lieberkuehn and regulates the pH of the duodenum by (1) inhibiting the secretion of gastric acid from the parietal cells of the stomach and (2) stimulating the production of bicarbonate (NaHCO(3)) from the ductal cells of the pancreas. Production of bicarbonate is essential to neutralize the pH and ensure no damage is done to the small intestine by the gastric acid. In addition to regulating the pH of the duodenal content, plays a central role in diet induced thermogenesis: acts as a non-sympathetic brown fat (BAT) activator mediating prandial thermogenesis, which consequentially induces satiation. Mechanistically, secretin released by the gut after a meal binds to secretin receptor (SCTR) in brown adipocytes, activating brown fat thermogenesis by stimulating lipolysis, which is sensed in the brain and promotes satiation. Also able to stimulate lipolysis in white adipocytes. Also plays an important role in cellular osmoregulation: released into the systemic circulation in response to hyperosmolality and acts at different levels in the hypothalamus, pituitary and kidney to regulate water homeostasis. Also plays a role in the central nervous system, possibly by acting as a neuropeptide hormone: required for hippocampal synaptic function and neural progenitor cells maintenance. This Bos taurus (Bovine) protein is Secretin.